The sequence spans 130 residues: UPF0212 protein PF1486 (130 aa).

Belongs to the UPF0212 family.

In Pyrococcus furiosus (strain ATCC 43587 / DSM 3638 / JCM 8422 / Vc1), this protein is UPF0212 protein PF1486.